The primary structure comprises 525 residues: Protein disulfide-isomerase A2 (525 aa).

The signal sequence occupies residues 1–21; it reads MSCQLLPVLLLLLLRASCPWG. A Thioredoxin 1 domain is found at 27-152; the sequence is RSPSEEPPEE…IAEWLRRRVG (126 aa). Residues cysteine 71 and cysteine 74 each act as nucleophile in the active site. An intrachain disulfide couples cysteine 71 to cysteine 74. 2 N-linked (GlcNAc...) asparagine glycosylation sites follow: asparagine 127 and asparagine 284. The 130-residue stretch at 367–496 folds into the Thioredoxin 2 domain; sequence VLNGQVKPYL…FSKFLDNGGV (130 aa). Catalysis depends on nucleophile residues cysteine 418 and cysteine 421. A disulfide bond links cysteine 418 and cysteine 421. A disordered region spans residues 498–525; the sequence is PTEEPLEEPAAPFPEPPANSTMGSKEEL. An N-linked (GlcNAc...) asparagine glycan is attached at asparagine 516. Residues 516 to 525 show a composition bias toward polar residues; that stretch reads NSTMGSKEEL. The short motif at 522 to 525 is the Prevents secretion from ER element; the sequence is KEEL.

The protein belongs to the protein disulfide isomerase family. As to quaternary structure, monomer; predominantly as monomer under reducing conditions. Homodimer; disulfide-linked. Part of a large chaperone multiprotein complex comprising DNAJB11, HSP90B1, HSPA5, HYOU, PDIA2, PDIA4, PDIA6, PPIB, SDF2L1, UGGT1 and very small amounts of ERP29, but not, or at very low levels, CALR nor CANX. In terms of processing, the disulfide-linked homodimer exhibits an enhanced chaperone activity. Glycosylated.

The protein localises to the endoplasmic reticulum lumen. The enzyme catalyses Catalyzes the rearrangement of -S-S- bonds in proteins.. Its function is as follows. Acts as an intracellular estrogen-binding protein. May be involved in modulating cellular levels and biological functions of estrogens in the pancreas. May act as a chaperone that inhibits aggregation of misfolded proteins. This Pongo abelii (Sumatran orangutan) protein is Protein disulfide-isomerase A2 (PDIA2).